We begin with the raw amino-acid sequence, 377 residues long: Molybdenum import ATP-binding protein ModC (377 aa).

The region spanning 17 to 254 (ITGDEAIRAR…LDLPFAHDED (238 aa)) is the ABC transporter domain. 52 to 59 (GHSGSGKT) is an ATP binding site. One can recognise a Mop domain in the interval 313 to 377 (DSSILNVLPA…AQVKGVALLR (65 aa)).

Belongs to the ABC transporter superfamily. Molybdate importer (TC 3.A.1.8) family. The complex is composed of two ATP-binding proteins (ModC), two transmembrane proteins (ModB) and a solute-binding protein (ModA).

The protein localises to the cell inner membrane. It carries out the reaction molybdate(out) + ATP + H2O = molybdate(in) + ADP + phosphate + H(+). In terms of biological role, part of the ABC transporter complex ModABC involved in molybdenum import. Responsible for energy coupling to the transport system. The polypeptide is Molybdenum import ATP-binding protein ModC (Aromatoleum aromaticum (strain DSM 19018 / LMG 30748 / EbN1) (Azoarcus sp. (strain EbN1))).